The chain runs to 271 residues: MTAWILLPVSLSAFSITGIWTVYAMAVMNHHVCPVENWSYNESCPPDPAEQGGPKTCCTLDDVPLISKCGSYPPESCLFSLIGNMGAFMVALICLLRYGQLLEQSRHSWVNTTALITGCTNAAGLLVVGNFQVDHARSLHYVGAGVAFPAGLLFVCLHCALSYQGATAPLDLAVAYLRSVLAVIAFITLVLSGVFFVHESSQLQHGAALCEWVCVIDILIFYGTFSYEFGAVSSDTLVAALQPTPGRACKSSGSSSTSTHLNCAPESIAMI.

The Cytoplasmic segment spans residues 1-2 (MT). A helical membrane pass occupies residues 3 to 23 (AWILLPVSLSAFSITGIWTVY). The Extracellular segment spans residues 24–75 (AMAVMNHHVCPVENWSYNESCPPDPAEQGGPKTCCTLDDVPLISKCGSYPPE). 2 N-linked (GlcNAc...) asparagine glycosylation sites follow: Asn37 and Asn41. Residues 76–96 (SCLFSLIGNMGAFMVALICLL) form a helical membrane-spanning segment. The Cytoplasmic segment spans residues 97–108 (RYGQLLEQSRHS). The chain crosses the membrane as a helical span at residues 109–129 (WVNTTALITGCTNAAGLLVVG). At 130–140 (NFQVDHARSLH) the chain is on the extracellular side. A helical transmembrane segment spans residues 141–161 (YVGAGVAFPAGLLFVCLHCAL). The Cytoplasmic segment spans residues 162–178 (SYQGATAPLDLAVAYLR). Residues 179-199 (SVLAVIAFITLVLSGVFFVHE) form a helical membrane-spanning segment. Topologically, residues 200-211 (SSQLQHGAALCE) are extracellular. A helical transmembrane segment spans residues 212–232 (WVCVIDILIFYGTFSYEFGAV). At 233 to 271 (SSDTLVAALQPTPGRACKSSGSSSTSTHLNCAPESIAMI) the chain is on the cytoplasmic side.

This sequence belongs to the DRAM/TMEM150 family. As to quaternary structure, interacts (via C-terminal cytoplasmic tail) with PI4KA.

The protein localises to the cell membrane. Its function is as follows. Regulates localization of phosphatidylinositol 4-kinase (PI4K) to the plasma membrane, possibly by reducing the association of TTC7 (TTC7A or TTC7B) with the PI4K complex. Acts as a regulator of phosphatidylinositol 4-phosphate (PtdIns(4)P) synthesis. May also play a role in fasting-induced catabolism. This Homo sapiens (Human) protein is Transmembrane protein 150A (TMEM150A).